Consider the following 28-residue polypeptide: Dermaseptin-2 (28 aa).

Residue glutamine 28 is modified to Glutamine amide.

Belongs to the frog skin active peptide (FSAP) family. Dermaseptin subfamily. As to expression, expressed by the skin glands.

The protein localises to the secreted. In terms of biological role, antimicrobial peptide with activity against the Gram-positive bacterium S.aureus, and the Gram-negative bacteria E.coli and P.aeruginosa. Probably acts by disturbing membrane functions with its amphipathic structure. Has an activity of stimulation of insulin release, which may protect the species from being eaten by predators by causing fatal hypoglycemia. Has hemolytic activity (60% hemolysis at 128 ug/ml). This is Dermaseptin-2 from Phyllomedusa tarsius (Brownbelly leaf frog).